The chain runs to 2742 residues: Polycystin-1-like protein 1 (2742 aa).

The Extracellular portion of the chain corresponds to methionine 1–aspartate 1602. N-linked (GlcNAc...) asparagine glycosylation is found at asparagine 35, asparagine 133, asparagine 149, asparagine 220, and asparagine 267. 2 consecutive PKD domains span residues alanine 286–asparagine 372 and lysine 370–proline 454. Asparagine 383, asparagine 397, asparagine 486, asparagine 545, asparagine 693, asparagine 709, and asparagine 735 each carry an N-linked (GlcNAc...) asparagine glycan. The REJ domain maps to cysteine 452–isoleucine 1338. 2 disordered regions span residues serine 767 to proline 829 and aspartate 846 to valine 908. Polar residues predominate over residues serine 779–phenylalanine 799. A compositionally biased stretch (low complexity) spans serine 880–serine 893. N-linked (GlcNAc...) asparagine glycans are attached at residues asparagine 1080, asparagine 1101, asparagine 1201, asparagine 1318, asparagine 1437, asparagine 1490, and asparagine 1568. One can recognise a GAIN-B domain in the interval histidine 1436–serine 1587. 2 disulfides stabilise this stretch: cysteine 1541-cysteine 1569 and cysteine 1556-cysteine 1571. The tract at residues cysteine 1541–serine 1587 is GPS. Residues leucine 1603 to cysteine 1623 form a helical membrane-spanning segment. Topologically, residues lysine 1624–arginine 1812 are cytoplasmic. One can recognise a PLAT domain in the interval histidine 1648–arginine 1769. The chain crosses the membrane as a helical span at residues leucine 1813 to glutamine 1833. The Extracellular segment spans residues arginine 1834 to serine 1851. Residues isoleucine 1852–leucine 1872 form a helical membrane-spanning segment. The Cytoplasmic portion of the chain corresponds to phenylalanine 1873–cysteine 2005. Residues valine 2006 to glycine 2026 form a helical membrane-spanning segment. The Extracellular segment spans residues threonine 2027–serine 2040. The helical transmembrane segment at leucine 2041 to alanine 2061 threads the bilayer. Residues alanine 2062–arginine 2151 lie on the Cytoplasmic side of the membrane. The chain crosses the membrane as a helical span at residues aspartate 2152 to valine 2172. The Extracellular portion of the chain corresponds to aspartate 2173–serine 2344. Asparagine 2218 is a glycosylation site (N-linked (GlcNAc...) asparagine). The helical transmembrane segment at methionine 2345 to leucine 2365 threads the bilayer. Residues tyrosine 2366–methionine 2378 are Cytoplasmic-facing. Residues glycine 2379–valine 2401 form a helical membrane-spanning segment. Residues histidine 2402–glycine 2442 are Extracellular-facing. A helical transmembrane segment spans residues isoleucine 2443 to alanine 2463. Residues proline 2464–proline 2467 lie on the Cytoplasmic side of the membrane. The chain crosses the membrane as a helical span at residues leucine 2468–phenylalanine 2488. Residues serine 2489–tyrosine 2528 are Extracellular-facing. Residues tyrosine 2529–isoleucine 2549 traverse the membrane as a helical segment. The Cytoplasmic segment spans residues arginine 2550–asparagine 2742.

It belongs to the polycystin family. In terms of assembly, heterodimer. Interacts with pkd2 to form a calcium channel. Interacts with pkd2l1 to form ciliary calcium channel. Expressed in Kupffer's vesicle, an organ equivalent to the node.

It is found in the cell projection. It localises to the cilium membrane. Component of a calcium-permeant ion channel formed by PKD1L2 and PKD1L1 in primary cilia, where it controls cilium calcium concentration, without affecting cytoplasmic calcium concentration, and regulates sonic hedgehog/SHH signaling and GLI2 transcription. The PKD1L1:PKD2L1 channel complex is mechanosensitive only at high pressures and is highly temperature sensitive. Also involved in left/right axis specification downstream of nodal flow by forming a complex with PKD2 in cilia to facilitate flow detection in left/right patterning. This is Polycystin-1-like protein 1 from Oryzias latipes (Japanese rice fish).